The sequence spans 382 residues: Gap junction alpha-1 protein (382 aa).

Residues 2-23 (GDWSALGKLLDKVQAYSTAGGK) lie on the Cytoplasmic side of the membrane. Position 5 is a phosphoserine (serine 5). The helical transmembrane segment at 24–44 (VWLSVLFIFRILLLGTAVESA) threads the bilayer. The Extracellular portion of the chain corresponds to 45 to 76 (WGDEQSAFRCNTQQPGCENVCYDKSFPISHVR). 2 disulfides stabilise this stretch: cysteine 54-cysteine 192 and cysteine 187-cysteine 198. The helical transmembrane segment at 77 to 97 (FWVLQIIFVSVPTLLYLAHVF) threads the bilayer. Topologically, residues 98–155 (YVMRKEEKLNKKEEELKVAQTDGVNVEMHLKQIEIKKFKYGIEEHGKVKMRGGLLRTY) are cytoplasmic. A Glycyl lysine isopeptide (Lys-Gly) (interchain with G-Cter in SUMO) cross-link involves residue lysine 144. The chain crosses the membrane as a helical span at residues 156 to 176 (IISILFKSVFEVAFLLIQWYI). The Extracellular segment spans residues 177–207 (YGFSLSAVYTCKRDPCPHQVDCFLSRPTEKT). A helical transmembrane segment spans residues 208 to 228 (IFIIFMLVVSLVSLALNIIEL). Residues 229 to 382 (FYVFFKGVKD…SRPRPDDLEI (154 aa)) lie on the Cytoplasmic side of the membrane. Lysine 237 participates in a covalent cross-link: Glycyl lysine isopeptide (Lys-Gly) (interchain with G-Cter in SUMO). The segment at 244–382 (SDPYHATTGP…SRPRPDDLEI (139 aa)) is interaction with NOV. At tyrosine 247 the chain carries Phosphotyrosine. 3 positions are modified to phosphoserine: serine 255, serine 257, and serine 262. The tract at residues 264–382 (KYAYFNGCSS…SRPRPDDLEI (119 aa)) is interaction with UBQLN4. At cysteine 271 the chain carries S-nitrosocysteine. Residue threonine 275 is modified to Phosphothreonine. Phosphoserine occurs at positions 306 and 314. The span at 317-332 (QNRMGQAGSTISNSHA) shows a compositional bias: polar residues. The interval 317–382 (QNRMGQAGST…SRPRPDDLEI (66 aa)) is disordered. Serine 325 is modified (phosphoserine; by CK1). Threonine 326 carries the post-translational modification Phosphothreonine. Phosphoserine; by CK1 is present on residues serine 328 and serine 330. A phosphoserine mark is found at serine 344 and serine 365. The segment covering 362 to 374 (RPSSRASSRASSR) has biased composition (low complexity). Residue serine 368 is modified to Phosphoserine; by PKC/PRKCG and PKC/PRKCD. Serine 369 and serine 373 each carry phosphoserine.

It belongs to the connexin family. Alpha-type (group II) subfamily. In terms of assembly, a connexon is composed of a hexamer of connexins. Interacts with SGSM3. Interacts with RIC1/CIP150. Interacts with CNST and CSNK1D. Interacts (via C-terminus) with TJP1. Interacts (via C-terminus) with SRC (via SH3 domain). Interacts (not ubiquitinated) with UBQLN4 (via UBA domain). Interacts with NOV. Interacts with TMEM65. Interacts with ANK3/ANKG and PKP2. In terms of processing, phosphorylation at Ser-325, Ser-328 and Ser-330 by CK1 modulates gap junction assembly. Phosphorylated at Ser-368 by PRKCG; phosphorylation induces disassembly of gap junction plaques and inhibition of gap junction activity. Phosphorylation at Ser-368 by PRKCD triggers its internalization into small vesicles leading to proteasome-mediated degradation. Post-translationally, sumoylated with SUMO1, SUMO2 and SUMO3, which may regulate the level of functional Cx43 gap junctions at the plasma membrane. May be desumoylated by SENP1 or SENP2. S-nitrosylation at Cys-271 is enriched at the muscle endothelial gap junction in arteries, it augments channel permeability and may regulate of smooth muscle cell to endothelial cell communication. In terms of processing, acetylated in the developing cortex; leading to delocalization from the cell membrane.

It localises to the cell membrane. The protein resides in the cell junction. It is found in the gap junction. The protein localises to the endoplasmic reticulum. Its function is as follows. Gap junction protein that acts as a regulator of bladder capacity. A gap junction consists of a cluster of closely packed pairs of transmembrane channels, the connexons, through which materials of low MW diffuse from one cell to a neighboring cell. May play a critical role in the physiology of hearing by participating in the recycling of potassium to the cochlear endolymph. Negative regulator of bladder functional capacity: acts by enhancing intercellular electrical and chemical transmission, thus sensitizing bladder muscles to cholinergic neural stimuli and causing them to contract. May play a role in cell growth inhibition through the regulation of NOV expression and localization. Plays an essential role in gap junction communication in the ventricles. The sequence is that of Gap junction alpha-1 protein (GJA1) from Ursus americanus (American black bear).